The primary structure comprises 121 residues: MRHAKRGRKLGRDAAHRNLMLGTMAGQLITHGRIKTTEAKAKELRGVVDRLINIAKRDDLHARRQAVKVLKDKRVVRHLFEEVAPDLDDRTSGYTRILKLGPRQGDGAEQVYLELVNHRVE.

The protein belongs to the bacterial ribosomal protein bL17 family. In terms of assembly, part of the 50S ribosomal subunit. Contacts protein L32.

The polypeptide is Large ribosomal subunit protein bL17 (Rubrobacter xylanophilus (strain DSM 9941 / JCM 11954 / NBRC 16129 / PRD-1)).